The primary structure comprises 113 residues: Large ribosomal subunit protein bL19 (113 aa).

This sequence belongs to the bacterial ribosomal protein bL19 family.

Its function is as follows. This protein is located at the 30S-50S ribosomal subunit interface and may play a role in the structure and function of the aminoacyl-tRNA binding site. In Corynebacterium diphtheriae (strain ATCC 700971 / NCTC 13129 / Biotype gravis), this protein is Large ribosomal subunit protein bL19.